The primary structure comprises 443 residues: Citrate transporter CitP (443 aa).

A run of 13 helical transmembrane segments spans residues 27 to 47 (ISGI…IAIS), 59 to 79 (IFAL…LPIF), 83 to 103 (LGGG…TNVM), 114 to 134 (FING…SSLF), 151 to 171 (VAFI…VIIG), 177 to 197 (AILY…IVPL), 209 to 229 (SAGI…LAII), 268 to 288 (YVQL…GTML), 294 to 314 (GINA…FGLL), 322 to 342 (VIMF…AGVG), 350 to 370 (VLLA…IVAI), 388 to 410 (AAIT…VLAA), and 422 to 442 (MGNR…VTFM).

Belongs to the 2-hydroxycarboxylate transporter (2-HCT) (TC 2.A.24) family.

The protein localises to the cell membrane. It catalyses the reaction (R)-lactate(in) + citrate(out) = (R)-lactate(out) + citrate(in). It carries out the reaction (S)-lactate(in) + citrate(out) = (S)-lactate(out) + citrate(in). The catalysed reaction is citrate(in) + H(+)(in) = citrate(out) + H(+)(out). Uptake of citrate is not affected by the absence or presence of Na(+) up to 25 mM and is increasingly inhibited by increasing Mg(2+) concentrations. In terms of biological role, secondary transporter involved in citrate metabolism. During cometabolism of citrate and glucose, catalyzes the uptake of divalent citrate into the cell coupled to the exit of monovalent lactate, a product of citrate fermentation during citrate-glucose cometabolism (precursor/product exchange). The citrate/lactate exchange is electrogenic and results in the generation of a membrane potential. In the absence of glucose, i.e. when no lactate is produced, CitP catalyzes the proton-dependent transport of citrate and malate. Transports the divalent form of citrate and malate with the concomitant uptake of one proton, therefore translocating a single unit of negative charge across the membrane. In vitro, transports a range of substrates that contain the 2-hydroxycarboxylate motif, HO-CR(2)-COO(-), with a preference for malate, citrate and monovalent 2-hydroxyisobutyrate. Modification of the OH or the COO(-) groups of the 2-hydroxycarboxylate motif drastically reduces the affinity of the transporter for the substrates, indicating their relevance in substrate recognition. Significant activity is also observed with some 2-oxocarboxylates and a 3-hydroxycarboxylate. This is Citrate transporter CitP from Leuconostoc mesenteroides subsp. mesenteroides.